The following is a 165-amino-acid chain: 6,7-dimethyl-8-ribityllumazine synthase (165 aa).

5-amino-6-(D-ribitylamino)uracil is bound by residues W26, S58 to E60, and V80 to I82. G85–T86 is a binding site for (2S)-2-hydroxy-3-oxobutyl phosphate. The active-site Proton donor is the H88. N113 is a 5-amino-6-(D-ribitylamino)uracil binding site. R127 contributes to the (2S)-2-hydroxy-3-oxobutyl phosphate binding site.

Belongs to the DMRL synthase family.

The catalysed reaction is (2S)-2-hydroxy-3-oxobutyl phosphate + 5-amino-6-(D-ribitylamino)uracil = 6,7-dimethyl-8-(1-D-ribityl)lumazine + phosphate + 2 H2O + H(+). The protein operates within cofactor biosynthesis; riboflavin biosynthesis; riboflavin from 2-hydroxy-3-oxobutyl phosphate and 5-amino-6-(D-ribitylamino)uracil: step 1/2. Catalyzes the formation of 6,7-dimethyl-8-ribityllumazine by condensation of 5-amino-6-(D-ribitylamino)uracil with 3,4-dihydroxy-2-butanone 4-phosphate. This is the penultimate step in the biosynthesis of riboflavin. This chain is 6,7-dimethyl-8-ribityllumazine synthase, found in Saccharopolyspora erythraea (strain ATCC 11635 / DSM 40517 / JCM 4748 / NBRC 13426 / NCIMB 8594 / NRRL 2338).